A 294-amino-acid chain; its full sequence is N-acetylmuramic acid 6-phosphate etherase (294 aa).

Positions 54-217 constitute an SIS domain; that stretch reads VIKSFEEEGR…STASMIGVGK (164 aa). The Proton donor role is filled by glutamate 82. Glutamate 113 is an active-site residue.

Belongs to the GCKR-like family. MurNAc-6-P etherase subfamily. As to quaternary structure, homodimer.

The enzyme catalyses N-acetyl-D-muramate 6-phosphate + H2O = N-acetyl-D-glucosamine 6-phosphate + (R)-lactate. The protein operates within amino-sugar metabolism; N-acetylmuramate degradation. Functionally, specifically catalyzes the cleavage of the D-lactyl ether substituent of MurNAc 6-phosphate, producing GlcNAc 6-phosphate and D-lactate. The polypeptide is N-acetylmuramic acid 6-phosphate etherase (Bacillus cereus (strain ATCC 14579 / DSM 31 / CCUG 7414 / JCM 2152 / NBRC 15305 / NCIMB 9373 / NCTC 2599 / NRRL B-3711)).